Reading from the N-terminus, the 286-residue chain is Transcription factor MafA (286 aa).

Phosphoserine is present on residues serine 14 and serine 49. A compositionally biased stretch (low complexity) spans 51–85; the sequence is SSTPLSTPCSSVPSSPSFCAPSPGGQPSAGPTAAP. Residues 51–87 are disordered; that stretch reads SSTPLSTPCSSVPSSPSFCAPSPGGQPSAGPTAAPLG. A phosphothreonine mark is found at threonine 53 and threonine 57. Residues serine 61 and serine 65 each carry the phosphoserine modification. Phosphothreonine is present on threonine 113. Positions 126 to 167 are disordered; sequence HHHHHHHQSYESFRPQPFGGEELPPAAHHHNAHHHHHHHHLR. Over residues 152–166 the composition is skewed to basic residues; it reads AHHHNAHHHHHHHHL. The basic motif stretch occupies residues 199–224; that stretch reads RLKQNRRTLKNRGYAQSCRYKRVQQR. Residues 199-262 enclose the bZIP domain; that stretch reads RLKQNRRTLK…DLYKEKYEKL (64 aa). Residues 227-248 form a leucine-zipper region; it reads LENEKCQLQSQVEQLKQEVSRL. The segment at 265–286 is disordered; the sequence is RGFPREPSPPAAPKTTAADFFM. Serine 272 carries the post-translational modification Phosphoserine. Low complexity predominate over residues 277 to 286; it reads PKTTAADFFM.

Belongs to the bZIP family. Maf subfamily. As to quaternary structure, forms homodimers or heterodimers. May interact (via leucine-zipper domain) with MAFB. May interact with FOS and JUN. Interacts with PCAF; this interaction impairs MAFA ubiquitination.

The protein localises to the nucleus. Transcription factor involved in transcription regulation during lens development, including that of crystallin and filensin/BFSP1 genes. Binds to CRE-type MARE 5'-TGCTGACGTCAGCA-3' and TRE-type MARE 5'-TGCTGACTCAGCA-3' DNA sequences. This is Transcription factor MafA (MAFA) from Gallus gallus (Chicken).